Consider the following 229-residue polypeptide: NAD(P)H-hydrate epimerase (229 aa).

The YjeF N-terminal domain maps to 10–217 (AINVDLELFN…ALQRKYELNL (208 aa)). Position 60 to 64 (60 to 64 (NNGGD)) interacts with (6S)-NADPHX. Positions 61 and 125 each coordinate K(+). Residues 129 to 135 (GFSFKPP) and aspartate 158 each bind (6S)-NADPHX. Residue serine 161 coordinates K(+).

The protein belongs to the NnrE/AIBP family. Requires K(+) as cofactor.

It catalyses the reaction (6R)-NADHX = (6S)-NADHX. The enzyme catalyses (6R)-NADPHX = (6S)-NADPHX. Catalyzes the epimerization of the S- and R-forms of NAD(P)HX, a damaged form of NAD(P)H that is a result of enzymatic or heat-dependent hydration. This is a prerequisite for the S-specific NAD(P)H-hydrate dehydratase to allow the repair of both epimers of NAD(P)HX. This Drosophila virilis (Fruit fly) protein is NAD(P)H-hydrate epimerase.